Consider the following 192-residue polypeptide: Probable GTP-binding protein EngB (192 aa).

In terms of domain architecture, EngB-type G spans 22–192; the sequence is GRPEIVFVGR…LLASIDTFTQ (171 aa). GTP contacts are provided by residues 30 to 37, 57 to 61, 75 to 78, 142 to 145, and 172 to 174; these read GRSNVGKS, GKTRL, DLPG, TKWD, and YSS. Mg(2+)-binding residues include S37 and T59.

It belongs to the TRAFAC class TrmE-Era-EngA-EngB-Septin-like GTPase superfamily. EngB GTPase family. It depends on Mg(2+) as a cofactor.

Its function is as follows. Necessary for normal cell division and for the maintenance of normal septation. The chain is Probable GTP-binding protein EngB from Chlorobaculum tepidum (strain ATCC 49652 / DSM 12025 / NBRC 103806 / TLS) (Chlorobium tepidum).